A 461-amino-acid polypeptide reads, in one-letter code: D-phenylhydantoinase (461 aa).

His59, His61, and Lys151 together coordinate a divalent metal cation. An N6-carboxylysine modification is found at Lys151. A substrate-binding site is contributed by Tyr156. A divalent metal cation contacts are provided by His182 and His239. Residue Ser286 coordinates substrate. Asp313 contributes to the a divalent metal cation binding site. Substrate is bound at residue Asn335.

Belongs to the metallo-dependent hydrolases superfamily. Hydantoinase/dihydropyrimidinase family. Homotetramer. A divalent metal cation is required as a cofactor. Post-translationally, carboxylation allows a single lysine to coordinate two divalent metal cations.

It catalyses the reaction D-5-phenylhydantoin + H2O = N-carbamoyl-D-phenylglycine + H(+). Its function is as follows. Catalyzes the stereospecific hydrolysis of the cyclic amide bond of D-hydantoin derivatives with an aromatic side chains at the 5'-position. Has no activity on dihydropyrimidines. The physiological function is unknown. The polypeptide is D-phenylhydantoinase (Escherichia coli (strain 55989 / EAEC)).